A 213-amino-acid chain; its full sequence is CDP-diacylglycerol--inositol 3-phosphatidyltransferase (213 aa).

Residues 1–5 (MPDEN) are Cytoplasmic-facing. A helical membrane pass occupies residues 6-26 (IFLFVPNLIGYARIVFAIISF). A topological domain (lumenal) is located at residue tyrosine 27. A helical transmembrane segment spans residues 28–48 (FMPCCPLTASSFYLLSGLLDA). 2 residues coordinate Mg(2+): aspartate 47 and aspartate 50. Residues 49-73 (FDGHAARALNQGTRFGAMLDMLTDR) lie on the Cytoplasmic side of the membrane. The a CDP-1,2-diacyl-sn-glycerol site is built by glycine 51, arginine 55, and threonine 61. Positions 68 and 72 each coordinate Mg(2+). Aspartate 72 acts as the Proton acceptor in catalysis. Residues 74 to 94 (CSTMCLLVNLALLYPGATLFF) traverse the membrane as a helical segment. Residue glutamine 95 is a topological domain, lumenal. A helical membrane pass occupies residues 96 to 116 (ISMSLDVASHWLHLHSSVVRG). Residues 117 to 139 (SESHKMIDLSGNPVLRIYYTSRP) are Cytoplasmic-facing. A helical transmembrane segment spans residues 140–160 (ALFTLCAGNELFYCLLYLFHF). At 161 to 174 (SEGPLVGSVGLFRM) the chain is on the lumenal side. Residues 175-195 (GLWVTAPIALLKSLISVIHLI) traverse the membrane as a helical segment. Over 196 to 213 (TAARNMAALDAADRAKKK) the chain is Cytoplasmic.

This sequence belongs to the CDP-alcohol phosphatidyltransferase class-I family. The cofactor is Mn(2+). It depends on Mg(2+) as a cofactor. In terms of tissue distribution, detected in placenta (at protein level). Widely expressed. Higher expression in adult liver and skeletal muscle, slightly lower levels seen in pancreas, kidney, lung, placenta, brain, heart, leukocyte, colon, small intestine, ovary, testis, prostate, thymus and spleen. In fetus, expressed in kidney, liver, lung and brain.

The protein resides in the endoplasmic reticulum membrane. The protein localises to the cell membrane. It carries out the reaction a CDP-1,2-diacyl-sn-glycerol + myo-inositol = a 1,2-diacyl-sn-glycero-3-phospho-(1D-myo-inositol) + CMP + H(+). With respect to regulation, inhibited by PtdIns (product inhibition), phosphatidylinositol phosphate, and nucleoside di- and tri-phosphates. In terms of biological role, catalyzes the biosynthesis of phosphatidylinositol (PtdIns) as well as PtdIns:inositol exchange reaction. May thus act to reduce an excessive cellular PtdIns content. The exchange activity is due to the reverse reaction of PtdIns synthase and is dependent on CMP, which is tightly bound to the enzyme. This chain is CDP-diacylglycerol--inositol 3-phosphatidyltransferase, found in Homo sapiens (Human).